Here is a 337-residue protein sequence, read N- to C-terminus: tRNA dimethylallyltransferase (337 aa).

Residue 24–31 (GPTGAGKT) coordinates ATP. 26–31 (TGAGKT) contributes to the substrate binding site. Interaction with substrate tRNA regions lie at residues 49–52 (DSRQ) and 188–192 (QRAVR).

It belongs to the IPP transferase family. As to quaternary structure, monomer. Mg(2+) serves as cofactor.

The enzyme catalyses adenosine(37) in tRNA + dimethylallyl diphosphate = N(6)-dimethylallyladenosine(37) in tRNA + diphosphate. Catalyzes the transfer of a dimethylallyl group onto the adenine at position 37 in tRNAs that read codons beginning with uridine, leading to the formation of N6-(dimethylallyl)adenosine (i(6)A). The sequence is that of tRNA dimethylallyltransferase from Nitratidesulfovibrio vulgaris (strain DSM 19637 / Miyazaki F) (Desulfovibrio vulgaris).